Consider the following 162-residue polypeptide: Peptide methionine sulfoxide reductase MsrA (162 aa).

The active site involves Cys-10.

This sequence belongs to the MsrA Met sulfoxide reductase family.

The enzyme catalyses L-methionyl-[protein] + [thioredoxin]-disulfide + H2O = L-methionyl-(S)-S-oxide-[protein] + [thioredoxin]-dithiol. It carries out the reaction [thioredoxin]-disulfide + L-methionine + H2O = L-methionine (S)-S-oxide + [thioredoxin]-dithiol. In terms of biological role, has an important function as a repair enzyme for proteins that have been inactivated by oxidation. Catalyzes the reversible oxidation-reduction of methionine sulfoxide in proteins to methionine. This Clostridium acetobutylicum (strain ATCC 824 / DSM 792 / JCM 1419 / IAM 19013 / LMG 5710 / NBRC 13948 / NRRL B-527 / VKM B-1787 / 2291 / W) protein is Peptide methionine sulfoxide reductase MsrA.